Here is a 168-residue protein sequence, read N- to C-terminus: Transcriptional repressor NrdR (168 aa).

The disordered stretch occupies residues 1 to 21 (MQCPACRHTDSRVLESRSSES). Residues 3–34 (CPACRHTDSRVLESRSSESGRSVRRRRECLSC) fold into a zinc finger. Residues 7–20 (RHTDSRVLESRSSE) show a composition bias toward basic and acidic residues. In terms of domain architecture, ATP-cone spans 49 to 139 (ISVIKRNGDR…VYRQFRGVRD (91 aa)).

Belongs to the NrdR family. Zn(2+) is required as a cofactor.

In terms of biological role, negatively regulates transcription of bacterial ribonucleotide reductase nrd genes and operons by binding to NrdR-boxes. This Synechococcus elongatus (strain ATCC 33912 / PCC 7942 / FACHB-805) (Anacystis nidulans R2) protein is Transcriptional repressor NrdR.